The chain runs to 127 residues: Fluoride-specific ion channel FluC (127 aa).

The next 4 membrane-spanning stretches (helical) occupy residues 4 to 24, 35 to 55, 71 to 91, and 103 to 123; these read LLLA…LLSM, LGTL…FAWF, TGFC…VFLL, and VFVN…LFSA. Na(+) contacts are provided by Gly-75 and Thr-78.

This sequence belongs to the fluoride channel Fluc/FEX (TC 1.A.43) family.

The protein localises to the cell inner membrane. The catalysed reaction is fluoride(in) = fluoride(out). Its activity is regulated as follows. Na(+) is not transported, but it plays an essential structural role and its presence is essential for fluoride channel function. In terms of biological role, fluoride-specific ion channel. Important for reducing fluoride concentration in the cell, thus reducing its toxicity. The chain is Fluoride-specific ion channel FluC from Escherichia coli (strain K12 / MC4100 / BW2952).